The primary structure comprises 873 residues: Bifunctional uridylyltransferase/uridylyl-removing enzyme (873 aa).

A uridylyltransferase region spans residues 1–332; sequence MAFQSPLTFN…NGGETEPAVI (332 aa). Residues 333–692 are uridylyl-removing; sequence INEDFQRRGR…MSKKATRGGT (360 aa). Positions 451-573 constitute an HD domain; sequence VDEHSVRLLN…VRDEERLEYL (123 aa). ACT domains lie at 693–773 and 800–873; these read EVFV…VKTR and LMEL…ELAP.

This sequence belongs to the GlnD family. Requires Mg(2+) as cofactor.

It carries out the reaction [protein-PII]-L-tyrosine + UTP = [protein-PII]-uridylyl-L-tyrosine + diphosphate. The enzyme catalyses [protein-PII]-uridylyl-L-tyrosine + H2O = [protein-PII]-L-tyrosine + UMP + H(+). With respect to regulation, uridylyltransferase (UTase) activity is inhibited by glutamine, while glutamine activates uridylyl-removing (UR) activity. Modifies, by uridylylation and deuridylylation, the PII regulatory proteins (GlnB and homologs), in response to the nitrogen status of the cell that GlnD senses through the glutamine level. Under low glutamine levels, catalyzes the conversion of the PII proteins and UTP to PII-UMP and PPi, while under higher glutamine levels, GlnD hydrolyzes PII-UMP to PII and UMP (deuridylylation). Thus, controls uridylylation state and activity of the PII proteins, and plays an important role in the regulation of nitrogen assimilation and metabolism. This chain is Bifunctional uridylyltransferase/uridylyl-removing enzyme, found in Vibrio vulnificus (strain CMCP6).